The sequence spans 89 residues: Small ribosomal subunit protein uS15 (89 aa).

The protein belongs to the universal ribosomal protein uS15 family. As to quaternary structure, part of the 30S ribosomal subunit. Forms a bridge to the 50S subunit in the 70S ribosome, contacting the 23S rRNA.

Its function is as follows. One of the primary rRNA binding proteins, it binds directly to 16S rRNA where it helps nucleate assembly of the platform of the 30S subunit by binding and bridging several RNA helices of the 16S rRNA. Functionally, forms an intersubunit bridge (bridge B4) with the 23S rRNA of the 50S subunit in the ribosome. This is Small ribosomal subunit protein uS15 from Listeria innocua serovar 6a (strain ATCC BAA-680 / CLIP 11262).